A 218-amino-acid polypeptide reads, in one-letter code: Small ribosomal subunit protein uS3c (218 aa).

The KH type-2 domain maps to 47 to 118 (VYKNIRNSSN…KLRMTLTEVT (72 aa)).

The protein belongs to the universal ribosomal protein uS3 family. Part of the 30S ribosomal subunit.

The protein localises to the plastid. The protein resides in the chloroplast. The sequence is that of Small ribosomal subunit protein uS3c (rps3) from Physcomitrium patens (Spreading-leaved earth moss).